The primary structure comprises 159 residues: NADH-quinone oxidoreductase subunit B (159 aa).

4 residues coordinate [4Fe-4S] cluster: Cys32, Cys33, Cys97, and Cys126.

The protein belongs to the complex I 20 kDa subunit family. As to quaternary structure, NDH-1 is composed of 14 different subunits. Subunits NuoB, C, D, E, F, and G constitute the peripheral sector of the complex. It depends on [4Fe-4S] cluster as a cofactor.

It localises to the cell inner membrane. The enzyme catalyses a quinone + NADH + 5 H(+)(in) = a quinol + NAD(+) + 4 H(+)(out). In terms of biological role, NDH-1 shuttles electrons from NADH, via FMN and iron-sulfur (Fe-S) centers, to quinones in the respiratory chain. The immediate electron acceptor for the enzyme in this species is believed to be ubiquinone. Couples the redox reaction to proton translocation (for every two electrons transferred, four hydrogen ions are translocated across the cytoplasmic membrane), and thus conserves the redox energy in a proton gradient. This is NADH-quinone oxidoreductase subunit B from Helicobacter pylori (strain J99 / ATCC 700824) (Campylobacter pylori J99).